We begin with the raw amino-acid sequence, 427 residues long: Adenylosuccinate synthetase (427 aa).

GTP-binding positions include 12–18 and 40–42; these read GDEGKGK and GHT. The active-site Proton acceptor is the Asp-13. Positions 13 and 40 each coordinate Mg(2+). IMP contacts are provided by residues 13-16, 38-41, Thr-128, Arg-142, Gln-223, Thr-238, and Arg-302; these read DEGK and NAGH. His-41 acts as the Proton donor in catalysis. 298–304 lines the substrate pocket; that stretch reads TTTGRAR. Residues Arg-304, 330–332, and 412–414 contribute to the GTP site; these read KLD and AVG.

The protein belongs to the adenylosuccinate synthetase family. As to quaternary structure, homodimer. Requires Mg(2+) as cofactor.

The protein localises to the cytoplasm. The enzyme catalyses IMP + L-aspartate + GTP = N(6)-(1,2-dicarboxyethyl)-AMP + GDP + phosphate + 2 H(+). The protein operates within purine metabolism; AMP biosynthesis via de novo pathway; AMP from IMP: step 1/2. Plays an important role in the de novo pathway of purine nucleotide biosynthesis. Catalyzes the first committed step in the biosynthesis of AMP from IMP. In Desulfitobacterium hafniense (strain DSM 10664 / DCB-2), this protein is Adenylosuccinate synthetase.